The primary structure comprises 454 residues: UPF0210 protein EUBELI_01067 (454 aa).

The protein belongs to the UPF0210 family. Homodimer.

The chain is UPF0210 protein EUBELI_01067 from Lachnospira eligens (strain ATCC 27750 / DSM 3376 / VPI C15-48 / C15-B4) (Eubacterium eligens).